A 374-amino-acid chain; its full sequence is Beta sliding clamp (374 aa).

It belongs to the beta sliding clamp family. As to quaternary structure, forms a ring-shaped head-to-tail homodimer around DNA which binds and tethers DNA polymerases and other proteins to the DNA. The DNA replisome complex has a single clamp-loading complex (3 tau and 1 each of delta, delta', psi and chi subunits) which binds 3 Pol III cores (1 core on the leading strand and 2 on the lagging strand) each with a beta sliding clamp dimer. Additional proteins in the replisome are other copies of gamma, psi and chi, Ssb, DNA helicase and RNA primase.

It is found in the cytoplasm. Confers DNA tethering and processivity to DNA polymerases and other proteins. Acts as a clamp, forming a ring around DNA (a reaction catalyzed by the clamp-loading complex) which diffuses in an ATP-independent manner freely and bidirectionally along dsDNA. Initially characterized for its ability to contact the catalytic subunit of DNA polymerase III (Pol III), a complex, multichain enzyme responsible for most of the replicative synthesis in bacteria; Pol III exhibits 3'-5' exonuclease proofreading activity. The beta chain is required for initiation of replication as well as for processivity of DNA replication. This chain is Beta sliding clamp (dnaN), found in Helicobacter pylori (strain J99 / ATCC 700824) (Campylobacter pylori J99).